The primary structure comprises 505 residues: ATP synthase subunit beta (505 aa).

Residues 1-25 are disordered; that stretch reads MAKAATPKETAAVKKPAAPKKAATA. 183 to 190 is an ATP binding site; that stretch reads GGAGVGKT.

Belongs to the ATPase alpha/beta chains family. F-type ATPases have 2 components, CF(1) - the catalytic core - and CF(0) - the membrane proton channel. CF(1) has five subunits: alpha(3), beta(3), gamma(1), delta(1), epsilon(1). CF(0) has three main subunits: a(1), b(2) and c(9-12). The alpha and beta chains form an alternating ring which encloses part of the gamma chain. CF(1) is attached to CF(0) by a central stalk formed by the gamma and epsilon chains, while a peripheral stalk is formed by the delta and b chains.

It localises to the cell inner membrane. The enzyme catalyses ATP + H2O + 4 H(+)(in) = ADP + phosphate + 5 H(+)(out). Functionally, produces ATP from ADP in the presence of a proton gradient across the membrane. The catalytic sites are hosted primarily by the beta subunits. This chain is ATP synthase subunit beta, found in Sinorhizobium fredii (strain NBRC 101917 / NGR234).